The chain runs to 864 residues: Probable M1 family aminopeptidase 2 (864 aa).

Substrate contacts are provided by residues glutamate 149 and 289–293 (GAMEN). Zn(2+) is bound at residue histidine 325. The active-site Proton acceptor is glutamate 326. Residues histidine 329 and glutamate 348 each contribute to the Zn(2+) site.

Belongs to the peptidase M1 family. Zn(2+) is required as a cofactor.

The chain is Probable M1 family aminopeptidase 2 from Encephalitozoon cuniculi (strain GB-M1) (Microsporidian parasite).